A 425-amino-acid chain; its full sequence is Adenosylhomocysteinase (425 aa).

The substrate site is built by threonine 60, aspartate 132, and glutamate 157. NAD(+) is bound at residue 158–160 (TTT). Lysine 187 and aspartate 191 together coordinate substrate. NAD(+) contacts are provided by residues asparagine 192, 221–226 (GYGWCG), glutamate 244, asparagine 279, 300–302 (SGH), and asparagine 347.

Belongs to the adenosylhomocysteinase family. NAD(+) is required as a cofactor.

The protein localises to the cytoplasm. The catalysed reaction is S-adenosyl-L-homocysteine + H2O = L-homocysteine + adenosine. It functions in the pathway amino-acid biosynthesis; L-homocysteine biosynthesis; L-homocysteine from S-adenosyl-L-homocysteine: step 1/1. In terms of biological role, may play a key role in the regulation of the intracellular concentration of adenosylhomocysteine. The polypeptide is Adenosylhomocysteinase (Nostoc sp. (strain PCC 7120 / SAG 25.82 / UTEX 2576)).